The chain runs to 136 residues: Pilotin AspS 2 (136 aa).

Positions 1–24 (MSIKQMPGRVLISLLLSVTGLLSG) are cleaved as a signal peptide. Cys25 carries N-palmitoyl cysteine lipidation. A lipid anchor (S-diacylglycerol cysteine) is attached at Cys25. A disulfide bond links Cys94 and Cys131.

Belongs to the GspS/AspS pilotin family. Cryo-electron microscopy shows that the complex forms a cylindrical channel with 15 GspD2 subunits, each of which interacts with its surrounding AspS2 (GspS-beta).

The protein localises to the cell outer membrane. Functionally, part of a type II secretion system (T2SS, formerly general secretion pathway, GSP) for the export of folded proteins across the outer membrane. Required for correct assembly of the type II secretion system-beta (T2SS-beta), for localization of GspD-beta to the cell outer membrane and for export of a labile enterotoxin by T2SS-beta. Each AspS2 binds to 2 GspD2 subunits and may clamp the monomers together, stabilizing structure and accelerating its assembly. This is Pilotin AspS 2 from Escherichia coli O78:H11 (strain H10407 / ETEC).